A 227-amino-acid polypeptide reads, in one-letter code: Triosephosphate isomerase (227 aa).

Substrate is bound at residue 9 to 11 (NFK). Histidine 93 acts as the Electrophile in catalysis. Glutamate 141 serves as the catalytic Proton acceptor. Residues isoleucine 146, glycine 180, and 201–202 (AS) contribute to the substrate site.

The protein belongs to the triosephosphate isomerase family. As to quaternary structure, homotetramer; dimer of dimers.

The protein localises to the cytoplasm. It carries out the reaction D-glyceraldehyde 3-phosphate = dihydroxyacetone phosphate. The protein operates within carbohydrate biosynthesis; gluconeogenesis. It participates in carbohydrate degradation; glycolysis; D-glyceraldehyde 3-phosphate from glycerone phosphate: step 1/1. Its function is as follows. Involved in the gluconeogenesis. Catalyzes stereospecifically the conversion of dihydroxyacetone phosphate (DHAP) to D-glyceraldehyde-3-phosphate (G3P). This Saccharolobus solfataricus (strain ATCC 35092 / DSM 1617 / JCM 11322 / P2) (Sulfolobus solfataricus) protein is Triosephosphate isomerase.